The following is a 518-amino-acid chain: Lysine--tRNA ligase (518 aa).

Positions 1–28 (MTEPTQPNAAQPDAARPNVAPEMDDNKI) are disordered. Residues glutamate 428 and glutamate 435 each contribute to the Mg(2+) site.

The protein belongs to the class-II aminoacyl-tRNA synthetase family. Homodimer. Requires Mg(2+) as cofactor.

The protein resides in the cytoplasm. It catalyses the reaction tRNA(Lys) + L-lysine + ATP = L-lysyl-tRNA(Lys) + AMP + diphosphate. The protein is Lysine--tRNA ligase of Paraburkholderia phytofirmans (strain DSM 17436 / LMG 22146 / PsJN) (Burkholderia phytofirmans).